The primary structure comprises 80 residues: uncharacterized protein (80 aa).

This sequence to M.leprae U650M.

This is an uncharacterized protein from Mycobacterium bovis (strain ATCC BAA-935 / AF2122/97).